The sequence spans 507 residues: MEFLSFPLSSALLIILLFMLVKKAIQNKNSKLPPGPRKLPVIGSLHHLIGDGLPHHALRNLAKKHGPLMHLQLGENSTLVVSSSKMARAIMSTHDLMFANRTVQFATDILLYGGKGIGLAPYGDYWRQIRKICVLELLSAKRVQSFQTVREEEISNLIRSISAESSKVNFSEMITSLTNDIIARAAFGEKCKDKHAFLSLIEEGIQLAGGFDIAGLFPSLKLLHVITGKKRQLERVHNELDRILVDIIKENKEKRRASKLNEDKYEENLVDVLVRVQENTQLEVPLANDNLKAVILDIFVAGSETSSTTIEWAMSEMLKNPKVMKKAQAEVRRVFSGNKKINETEIQELSYLKLVLKETLRLHAPAPLLIPRECRESCEIDGYEIPKKTMVMVNAWAIGRDPENWSNGDRFEPERFDGISVDYKGTNFEYIPFGAGRRICPGMLFGMANVEVPLARLLYHFDWELPNGIKPEELDMDETFGTTVRRKNHLYLIPTVVHELERSTTKE.

A helical transmembrane segment spans residues 1-21 (MEFLSFPLSSALLIILLFMLV). Cys-440 lines the heme pocket.

Belongs to the cytochrome P450 family. The cofactor is heme. In terms of tissue distribution, rhizome-specific expression.

The protein resides in the membrane. It carries out the reaction (-)-deoxypodophyllotoxin + reduced [NADPH--hemoprotein reductase] + O2 = (-)-4'-desmethyl-deoxypodophyllotoxin + formaldehyde + oxidized [NADPH--hemoprotein reductase] + H2O + H(+). It functions in the pathway aromatic compound metabolism; phenylpropanoid biosynthesis. In terms of biological role, cytochrome P450 involved in the biosynthesis of etoposide, a chemotherapeutic compound of the topoisomerase inhibitor family. Catalyzes the conversion of deoxypodophyllotoxin to desmethyl-deoxypodophyllotoxin. The chain is Desmethyl-deoxy-podophyllotoxin synthase from Sinopodophyllum hexandrum (Himalayan may apple).